Here is a 359-residue protein sequence, read N- to C-terminus: MRKIVHVDMDAFYASVEQRDDPGLRGKPVVVAWRGARSVVCAASYEARTFGIRSAMPAVRAERLCPDAIFVPPDFARYKAVSRQVREIFHRHTDLVEPLSLDEAYLDVTHAKTGMQLATEVAQLIRTQIREETQLTASAGIAPNKFLAKIASDWRKPDGQFVIAPSRVDAFLLPLKVNRIPGVGKVMDGKLAALGIVTVADLRQRPLEELQAHFGSFGQSLYRRARGIDERPVEPDQEVQSVSSEDTFSEDLALDALDPHILRLAEKTWLATRRTERIGRTVVLKLKTSNFRILTRSYTPEQPPTSQEALAQIALALTRRVELPTQTRYRLVGVGLSGFSDVEDGAVQGQLFGQMPPLE.

One can recognise a UmuC domain in the interval I4 to G184. Mg(2+)-binding residues include D8 and D102. The active site involves E103.

The protein belongs to the DNA polymerase type-Y family. Monomer. The cofactor is Mg(2+).

Its subcellular location is the cytoplasm. It catalyses the reaction DNA(n) + a 2'-deoxyribonucleoside 5'-triphosphate = DNA(n+1) + diphosphate. Its function is as follows. Poorly processive, error-prone DNA polymerase involved in untargeted mutagenesis. Copies undamaged DNA at stalled replication forks, which arise in vivo from mismatched or misaligned primer ends. These misaligned primers can be extended by PolIV. Exhibits no 3'-5' exonuclease (proofreading) activity. May be involved in translesional synthesis, in conjunction with the beta clamp from PolIII. The protein is DNA polymerase IV of Xanthomonas euvesicatoria pv. vesicatoria (strain 85-10) (Xanthomonas campestris pv. vesicatoria).